Reading from the N-terminus, the 221-residue chain is Guanylate kinase (221 aa).

The Guanylate kinase-like domain maps to 18 to 196; that stretch reads GFLFILSSPS…SASLIKSIYL (179 aa). 25–32 is a binding site for ATP; sequence SPSGAGKS.

Belongs to the guanylate kinase family.

Its subcellular location is the cytoplasm. It carries out the reaction GMP + ATP = GDP + ADP. In terms of biological role, essential for recycling GMP and indirectly, cGMP. This Bartonella quintana (strain Toulouse) (Rochalimaea quintana) protein is Guanylate kinase.